The sequence spans 380 residues: Cytochrome b (380 aa).

The next 4 membrane-spanning stretches (helical) occupy residues 33–53 (FGSL…FLAM), 77–98 (WLIR…YLHI), 113–133 (WNVG…GYVL), and 178–198 (FFAF…IHLL). Residues H83 and H97 each coordinate heme b. Heme b contacts are provided by H182 and H196. H201 serves as a coordination point for a ubiquinone. The next 4 helical transmembrane spans lie at 226–246 (YKDL…ALFS), 288–308 (LGGV…PALH), 320–340 (ITQL…WIGG), and 347–367 (FIII…TLIP).

The protein belongs to the cytochrome b family. In terms of assembly, the cytochrome bc1 complex contains 3 respiratory subunits (MT-CYB, CYC1 and UQCRFS1), 2 core proteins (UQCRC1 and UQCRC2) and probably 6 low-molecular weight proteins. Heme b serves as cofactor.

The protein localises to the mitochondrion inner membrane. In terms of biological role, component of the ubiquinol-cytochrome c reductase complex (complex III or cytochrome b-c1 complex) that is part of the mitochondrial respiratory chain. The b-c1 complex mediates electron transfer from ubiquinol to cytochrome c. Contributes to the generation of a proton gradient across the mitochondrial membrane that is then used for ATP synthesis. In Percopsis transmontana (Sand roller), this protein is Cytochrome b (mt-cyb).